Here is a 513-residue protein sequence, read N- to C-terminus: Pleiotropic regulator 1 (513 aa).

N-acetylmethionine is present on Met1. The interval 60–79 (TSKENLKEKGPQNATDSYPH) is disordered. Ser119 carries the phosphoserine modification. The segment at 136 to 160 (VDANRTGPAGSEYRHPGASDRSQPT) is disordered. The residue at position 200 (Ser200) is a Phosphoserine. 7 WD repeats span residues 201–240 (GHLG…LKLS), 243–282 (GHIS…VIRH), 285–324 (GHLS…SVHT), 327–366 (GHTN…TRVT), 369–409 (NHKK…QNLS), 410–448 (GHNA…NFQR), and 459–498 (DSES…TEET). Ser390 carries the post-translational modification Phosphoserine.

Belongs to the WD repeat PRL1/PRL2 family. As to quaternary structure, identified in the spliceosome C complex. Component of the PRP19-CDC5L splicing complex composed of a core complex comprising a homotetramer of PRPF19, CDC5L, PLRG1 and BCAS2, and at least three less stably associated proteins CTNNBL1, CWC15 and HSPA8. Interacts (via its WD40 repeat domain) directly with CDC5L (via its C-terminal); the interaction is required for mRNA splicing but not for spliceosome assembly. Component of the minor spliceosome, which splices U12-type introns. Within this complex, interacts with CRIPT. Also interacts directly in the complex with BCAS2 and PRPF19. Interacts with USB1.

The protein localises to the nucleus. Its subcellular location is the nucleus speckle. Functionally, involved in pre-mRNA splicing as component of the spliceosome. Component of the PRP19-CDC5L complex that forms an integral part of the spliceosome and is required for activating pre-mRNA splicing. As a component of the minor spliceosome, involved in the splicing of U12-type introns in pre-mRNAs. In Mus musculus (Mouse), this protein is Pleiotropic regulator 1 (Plrg1).